We begin with the raw amino-acid sequence, 731 residues long: RNA-binding protein RMD9-like, mitochondrial (731 aa).

The segment covering 1-10 (MIRLAQQTQV) has biased composition (polar residues). 3 disordered regions span residues 1–29 (MIRLAQQTQVLKGKPPNQFVPHPTKNSLT), 77–133 (GGNI…GNSI), and 590–630 (QNDR…FNNP). Residues 83 to 100 (NNNNHLAQNNSNNSNNHH) show a composition bias toward low complexity. Residues 101–122 (NNNRNHHHNNNRNHHQNNHNHS) show a composition bias toward basic residues. At Ser-132 the chain carries Phosphoserine. A compositionally biased stretch (polar residues) spans 598–617 (SNMNSTQISRTATPSPSLTP).

It belongs to the RMD9 family. Monomer. Phosphorylated. Phosphorylation promotes binding to RNA.

Its subcellular location is the mitochondrion inner membrane. May be involved in the processing or stability of mitochondrial mRNAs. The chain is RNA-binding protein RMD9-like, mitochondrial from Saccharomyces cerevisiae (strain ATCC 204508 / S288c) (Baker's yeast).